Consider the following 236-residue polypeptide: Uridylate kinase (236 aa).

10–13 (KLSG) is an ATP binding site. Gly-52 provides a ligand contact to UMP. ATP-binding residues include Gly-53 and Arg-57. UMP contacts are provided by residues Asp-72 and 133-140 (TGNPFFTT). ATP-binding residues include Thr-160, Tyr-166, and Asp-169.

The protein belongs to the UMP kinase family. Homohexamer.

The protein resides in the cytoplasm. It carries out the reaction UMP + ATP = UDP + ADP. It functions in the pathway pyrimidine metabolism; CTP biosynthesis via de novo pathway; UDP from UMP (UMPK route): step 1/1. Its activity is regulated as follows. Inhibited by UTP. Its function is as follows. Catalyzes the reversible phosphorylation of UMP to UDP. In Bacteroides fragilis (strain ATCC 25285 / DSM 2151 / CCUG 4856 / JCM 11019 / LMG 10263 / NCTC 9343 / Onslow / VPI 2553 / EN-2), this protein is Uridylate kinase.